Consider the following 176-residue polypeptide: Large ribosomal subunit protein uL6 (176 aa).

This sequence belongs to the universal ribosomal protein uL6 family. As to quaternary structure, part of the 50S ribosomal subunit.

Its function is as follows. This protein binds to the 23S rRNA, and is important in its secondary structure. It is located near the subunit interface in the base of the L7/L12 stalk, and near the tRNA binding site of the peptidyltransferase center. This is Large ribosomal subunit protein uL6 from Burkholderia ambifaria (strain MC40-6).